The chain runs to 193 residues: Acyl carrier protein phosphodiesterase (193 aa).

Belongs to the AcpH family.

It catalyses the reaction holo-[ACP] + H2O = apo-[ACP] + (R)-4'-phosphopantetheine + H(+). In terms of biological role, converts holo-ACP to apo-ACP by hydrolytic cleavage of the phosphopantetheine prosthetic group from ACP. This Escherichia coli O139:H28 (strain E24377A / ETEC) protein is Acyl carrier protein phosphodiesterase.